A 600-amino-acid chain; its full sequence is MSTVVQQVPAELQAALTLINNDPRMRTNNAWALSADKRWSLKFTAELSVPCSSFMPDNSVWHLVLWQEETLIRIEVYPDKSEGISATFQHQNYNFSDASTREWTSGNPCLENTPTVFGRNLWGLEPEALLDRISWRLSRLLLWIDAAAQEKLATTGDAVELPAFPDQSPFTVIGFSEQIDDLPFWASKTGEWGFASSTGLPGAHGTLFLREFLDNKGKLIRTTKWSPFMRKGARTTNAVWSVLPTLPVLAPWQAPRTWQELSHCFAQCGLSLPDLFSDIGRSVRALRKQRAPGLLLLGFPLENKIGDEPARIHWLALRLAGLSNTMTKRPGFRPTERNRRTWDREQPLSQEPIRWVRTQNWAADQLRTRGEAANDIRSKKVLIIGAGSLGSMIAENLMRIGVVSQGILDADLLQTGNLSRHALTMTSVGHNKAAALVEHLNRILPDASARSFSCAFPPESEVAKNSLRQYDVIIDCTGDDGVLKSLAAFDWKSEKIFISLAMTWRAEGLFAFAASETSFPVTDASSRFNASASPEIDMDEARIEGIGCWHPVFPARADDVQLWAAVGTKFICRVVSAPGRIYEYFKQMPDGTVEKEPHEY.

The tract at residues 1 to 158 is E2-like domain; sequence MSTVVQQVPA…QEKLATTGDA (158 aa). Cys109 (for E2-like domain) is an active-site residue. The tract at residues 159–373 is linker domain; sequence VELPAFPDQS…DQLRTRGEAA (215 aa). The adenylation plus E1-like domain stretch occupies residues 375–600; that stretch reads DIRSKKVLII…GTVEKEPHEY (226 aa). Cys548 functions as the For E1-like domain in the catalytic mechanism.

This sequence in the C-terminal section; belongs to the HesA/MoeB/ThiF family. As to quaternary structure, crystallizes as a Cap2 homodimer bound on each side by a CdnD monomer.

In terms of biological role, CD-NTase priming component of a CBASS antiviral system. CBASS (cyclic oligonucleotide-based antiphage signaling system) provides immunity against bacteriophages. The CD-NTase protein (CdnD) synthesizes cyclic nucleotides in response to infection; these serve as specific second messenger signals. The signals activate a diverse range of effectors, leading to bacterial cell death and thus abortive phage infection. A type II-C(AAG) CBASS system. Functionally, primes CdnD; acts as a protein transferase, conjugating CdnD, the CD-NTase, to unidentified target(s) in the cell via an E1-E2 ubiquitin transferase-like mechanism. Upon phage infection CdnD activates and makes cyclic nucleotides. During the conjugation reaction CdnD is transiently attached to AMP. Protein conjugation requires ATP. Its function is as follows. Protects E.coli against phage T2 infection. When the cdnD-cap2-cap3-cap4 operon is introduced in E.coli there is a more than 10(3) decrease in the efficiency of T2 plaque formation. The operon does not protect against phage T5 and only about 10-fold against T7. This Enterobacter hormaechei subsp. hoffmannii (strain UCI 50) protein is ATP-dependent ubiquitin transferase-like protein Cap2.